Consider the following 1368-residue polypeptide: DNA-directed RNA polymerase subunit beta (1368 aa).

It belongs to the RNA polymerase beta chain family. In terms of assembly, the RNAP catalytic core consists of 2 alpha, 1 beta, 1 beta' and 1 omega subunit. When a sigma factor is associated with the core the holoenzyme is formed, which can initiate transcription.

The catalysed reaction is RNA(n) + a ribonucleoside 5'-triphosphate = RNA(n+1) + diphosphate. Its function is as follows. DNA-dependent RNA polymerase catalyzes the transcription of DNA into RNA using the four ribonucleoside triphosphates as substrates. This Legionella pneumophila (strain Lens) protein is DNA-directed RNA polymerase subunit beta.